A 211-amino-acid chain; its full sequence is Imidazole glycerol phosphate synthase subunit HisH (211 aa).

Residues Val3 to Val211 form the Glutamine amidotransferase type-1 domain. The Nucleophile role is filled by Cys81. Residues His186 and Glu188 contribute to the active site.

As to quaternary structure, heterodimer of HisH and HisF.

Its subcellular location is the cytoplasm. It carries out the reaction 5-[(5-phospho-1-deoxy-D-ribulos-1-ylimino)methylamino]-1-(5-phospho-beta-D-ribosyl)imidazole-4-carboxamide + L-glutamine = D-erythro-1-(imidazol-4-yl)glycerol 3-phosphate + 5-amino-1-(5-phospho-beta-D-ribosyl)imidazole-4-carboxamide + L-glutamate + H(+). The enzyme catalyses L-glutamine + H2O = L-glutamate + NH4(+). Its pathway is amino-acid biosynthesis; L-histidine biosynthesis; L-histidine from 5-phospho-alpha-D-ribose 1-diphosphate: step 5/9. In terms of biological role, IGPS catalyzes the conversion of PRFAR and glutamine to IGP, AICAR and glutamate. The HisH subunit catalyzes the hydrolysis of glutamine to glutamate and ammonia as part of the synthesis of IGP and AICAR. The resulting ammonia molecule is channeled to the active site of HisF. This chain is Imidazole glycerol phosphate synthase subunit HisH, found in Cyanothece sp. (strain PCC 7425 / ATCC 29141).